The primary structure comprises 199 residues: ATP-dependent Clp protease proteolytic subunit (199 aa).

Catalysis depends on Ser102, which acts as the Nucleophile. Residue His127 is part of the active site.

This sequence belongs to the peptidase S14 family. In terms of assembly, component of the chloroplastic Clp protease core complex.

It is found in the plastid. Its subcellular location is the chloroplast stroma. It carries out the reaction Hydrolysis of proteins to small peptides in the presence of ATP and magnesium. alpha-casein is the usual test substrate. In the absence of ATP, only oligopeptides shorter than five residues are hydrolyzed (such as succinyl-Leu-Tyr-|-NHMec, and Leu-Tyr-Leu-|-Tyr-Trp, in which cleavage of the -Tyr-|-Leu- and -Tyr-|-Trp bonds also occurs).. Its function is as follows. Cleaves peptides in various proteins in a process that requires ATP hydrolysis. Has a chymotrypsin-like activity. Plays a major role in the degradation of misfolded proteins. This chain is ATP-dependent Clp protease proteolytic subunit, found in Physcomitrium patens (Spreading-leaved earth moss).